Reading from the N-terminus, the 898-residue chain is Alanine--tRNA ligase (898 aa).

Positions 589, 593, 693, and 697 each coordinate Zn(2+).

The protein belongs to the class-II aminoacyl-tRNA synthetase family. Requires Zn(2+) as cofactor.

It is found in the cytoplasm. It catalyses the reaction tRNA(Ala) + L-alanine + ATP = L-alanyl-tRNA(Ala) + AMP + diphosphate. Catalyzes the attachment of alanine to tRNA(Ala) in a two-step reaction: alanine is first activated by ATP to form Ala-AMP and then transferred to the acceptor end of tRNA(Ala). Also edits incorrectly charged Ser-tRNA(Ala) and Gly-tRNA(Ala) via its editing domain. The protein is Alanine--tRNA ligase of Methanothermobacter thermautotrophicus (strain ATCC 29096 / DSM 1053 / JCM 10044 / NBRC 100330 / Delta H) (Methanobacterium thermoautotrophicum).